A 387-amino-acid chain; its full sequence is MTVGLGMPQPPAPTLAPRRATRQLMVGNVGVGSDHPVSVQSMCTTKTHDVNSTLQQIAELTAAGCDIVRVACPRQEDADALAEIARHSQIPVVADIHFQPRYIFAAIDAGCAAVRVNPGNIKEFDGRVGEVAKAAGAAGIPIRIGVNAGSLDKRFMEKYGKATPEALVESALWEASLFEEHGFGDIKISVKHNDPVVMVAAYELLAARCDYPLHLGVTEAGPAFQGTIKSAVAFGALLSRGIGDTIRVSLSAPPVEEVKVGNQVLESLNLRPRSLEIVSCPSCGRAQVDVYTLANEVTAGLDGLDVPLRVAVMGCVVNGPGEAREADLGVASGNGKGQIFVRGEVIKTVPEAQIVETLIEEAMRLAAEMGEQAPGATPSGSPIVTVS.

The [4Fe-4S] cluster site is built by cysteine 280, cysteine 283, cysteine 315, and glutamate 322.

The protein belongs to the IspG family. The cofactor is [4Fe-4S] cluster.

It catalyses the reaction (2E)-4-hydroxy-3-methylbut-2-enyl diphosphate + oxidized [flavodoxin] + H2O + 2 H(+) = 2-C-methyl-D-erythritol 2,4-cyclic diphosphate + reduced [flavodoxin]. The protein operates within isoprenoid biosynthesis; isopentenyl diphosphate biosynthesis via DXP pathway; isopentenyl diphosphate from 1-deoxy-D-xylulose 5-phosphate: step 5/6. Its function is as follows. Converts 2C-methyl-D-erythritol 2,4-cyclodiphosphate (ME-2,4cPP) into 1-hydroxy-2-methyl-2-(E)-butenyl 4-diphosphate. In Mycobacterium bovis (strain ATCC BAA-935 / AF2122/97), this protein is 4-hydroxy-3-methylbut-2-en-1-yl diphosphate synthase (flavodoxin).